Consider the following 146-residue polypeptide: Large ribosomal subunit protein bL19 (146 aa).

It belongs to the bacterial ribosomal protein bL19 family.

Its function is as follows. This protein is located at the 30S-50S ribosomal subunit interface and may play a role in the structure and function of the aminoacyl-tRNA binding site. This chain is Large ribosomal subunit protein bL19, found in Bartonella quintana (strain Toulouse) (Rochalimaea quintana).